We begin with the raw amino-acid sequence, 434 residues long: UDP-N-acetylglucosamine 1-carboxyvinyltransferase 1 (434 aa).

Position 22 to 23 (22 to 23) interacts with phosphoenolpyruvate; that stretch reads KN. R93 contributes to the UDP-N-acetyl-alpha-D-glucosamine binding site. The active-site Proton donor is C117. At C117 the chain carries 2-(S-cysteinyl)pyruvic acid O-phosphothioketal. UDP-N-acetyl-alpha-D-glucosamine is bound by residues 122–126, D306, and V328; that span reads RPIDQ.

It belongs to the EPSP synthase family. MurA subfamily.

The protein resides in the cytoplasm. The catalysed reaction is phosphoenolpyruvate + UDP-N-acetyl-alpha-D-glucosamine = UDP-N-acetyl-3-O-(1-carboxyvinyl)-alpha-D-glucosamine + phosphate. It functions in the pathway cell wall biogenesis; peptidoglycan biosynthesis. Cell wall formation. Adds enolpyruvyl to UDP-N-acetylglucosamine. This is UDP-N-acetylglucosamine 1-carboxyvinyltransferase 1 from Bacillus cereus (strain ATCC 14579 / DSM 31 / CCUG 7414 / JCM 2152 / NBRC 15305 / NCIMB 9373 / NCTC 2599 / NRRL B-3711).